A 288-amino-acid polypeptide reads, in one-letter code: 2-hydroxy-6-oxononadienedioate/2-hydroxy-6-oxononatrienedioate hydrolase (288 aa).

The AB hydrolase-1 domain occupies valine 38–histidine 273. Histidine 267 functions as the Proton acceptor in the catalytic mechanism.

The protein belongs to the AB hydrolase superfamily. MhpC family. As to quaternary structure, homodimer.

It catalyses the reaction (2Z,4E)-2-hydroxy-6-oxonona-2,4-dienedioate + H2O = (2Z)-2-hydroxypenta-2,4-dienoate + succinate + H(+). It carries out the reaction (2Z,4E,7E)-2-hydroxy-6-oxonona-2,4,7-trienedioate + H2O = (2Z)-2-hydroxypenta-2,4-dienoate + fumarate + H(+). It functions in the pathway aromatic compound metabolism; 3-phenylpropanoate degradation. Catalyzes the cleavage of the C5-C6 bond of 2-hydroxy-6-oxononadienedioate and 2-hydroxy-6-oxononatrienedioate, a dienol ring fission product of the bacterial meta-cleavage pathway for degradation of phenylpropionic acid. The sequence is that of 2-hydroxy-6-oxononadienedioate/2-hydroxy-6-oxononatrienedioate hydrolase from Escherichia coli O139:H28 (strain E24377A / ETEC).